The primary structure comprises 204 residues: DNA-directed RNA polymerase subunit gamma (204 aa).

Zn(2+)-binding residues include cysteine 34, cysteine 36, cysteine 49, and cysteine 52.

This sequence belongs to the RNA polymerase beta' chain family. RpoC1 subfamily. In cyanobacteria the RNAP catalytic core is composed of 2 alpha, 1 beta, 1 beta', 1 gamma and 1 omega subunit. When a sigma factor is associated with the core the holoenzyme is formed, which can initiate transcription. Requires Zn(2+) as cofactor.

It catalyses the reaction RNA(n) + a ribonucleoside 5'-triphosphate = RNA(n+1) + diphosphate. Functionally, DNA-dependent RNA polymerase catalyzes the transcription of DNA into RNA using the four ribonucleoside triphosphates as substrates. The chain is DNA-directed RNA polymerase subunit gamma (rpoC1) from Prochlorococcus marinus (strain DV1).